The sequence spans 199 residues: Photosystem I reaction center subunit XI (199 aa).

The next 2 membrane-spanning stretches (helical) occupy residues 108 to 128 and 165 to 185; these read VTAG…LLVL and FWLG…TLHL.

It belongs to the PsaL family.

The protein resides in the cellular thylakoid membrane. The polypeptide is Photosystem I reaction center subunit XI (Prochlorococcus marinus (strain MIT 9215)).